We begin with the raw amino-acid sequence, 304 residues long: tRNA-5-methyluridine(54) 2-sulfurtransferase (304 aa).

Zn(2+) contacts are provided by Cys-3, Cys-6, Cys-22, and His-25. Residues Ala-53 and Ile-79 each coordinate ATP. [4Fe-4S] cluster-binding residues include Cys-131 and Cys-134. Residues Arg-138 and Gly-157 each contribute to the ATP site. Cys-224 is a [4Fe-4S] cluster binding site. 4 residues coordinate Zn(2+): Cys-274, Cys-277, Cys-286, and Cys-289.

This sequence belongs to the TtcA family. TtuA subfamily. In terms of assembly, homodimer. The cofactor is [4Fe-4S] cluster. Mg(2+) is required as a cofactor.

The enzyme catalyses 5-methyluridine(54) in tRNA + hydrogen sulfide + ATP = 5-methyl-2-thiouridine(54) in tRNA + AMP + diphosphate. It functions in the pathway tRNA modification. Catalyzes the ATP-dependent 2-thiolation of 5-methyluridine residue at position 54 in the T loop of tRNAs, leading to 5-methyl-2-thiouridine (m(5)s(2)U or s(2)T). This modification allows thermal stabilization of tRNAs in thermophilic microorganisms, and is required for cell growth at high temperatures. Can use free sulfide as sulfur source in vitro. The chain is tRNA-5-methyluridine(54) 2-sulfurtransferase from Thermotoga maritima (strain ATCC 43589 / DSM 3109 / JCM 10099 / NBRC 100826 / MSB8).